A 107-amino-acid chain; its full sequence is Putidaredoxin (107 aa).

The region spanning 2–106 (SKVVYVSHDG…GIVVDVPDRQ (105 aa)) is the 2Fe-2S ferredoxin-type domain. 4 residues coordinate [2Fe-2S] cluster: Cys40, Cys46, Cys49, and Cys87.

It belongs to the adrenodoxin/putidaredoxin family. In terms of assembly, monomer. It depends on [2Fe-2S] cluster as a cofactor.

In terms of biological role, the oxidation of camphor by cytochrome P450-CAM requires the participation of a flavoprotein, putidaredoxin reductase, and an iron-sulfur protein, putidaredoxin, to mediate the transfer of electrons from NADH to P450 for oxygen activation. This Pseudomonas putida (Arthrobacter siderocapsulatus) protein is Putidaredoxin (camB).